A 363-amino-acid polypeptide reads, in one-letter code: NAD(P)H-quinone oxidoreductase subunit 1, chloroplastic (363 aa).

The next 6 membrane-spanning stretches (helical) occupy residues 28-48, 98-118, 127-147, 248-268, 300-320, and 343-363; these read WVLV…LVIV, FSIG…VIPF, LPIG…GLLM, YSGI…LVSS, VFGM…FLFI, and FLLP…LFSL.

The protein belongs to the complex I subunit 1 family. In terms of assembly, NDH is composed of at least 16 different subunits, 5 of which are encoded in the nucleus.

Its subcellular location is the plastid. The protein resides in the chloroplast thylakoid membrane. It catalyses the reaction a plastoquinone + NADH + (n+1) H(+)(in) = a plastoquinol + NAD(+) + n H(+)(out). The catalysed reaction is a plastoquinone + NADPH + (n+1) H(+)(in) = a plastoquinol + NADP(+) + n H(+)(out). Functionally, NDH shuttles electrons from NAD(P)H:plastoquinone, via FMN and iron-sulfur (Fe-S) centers, to quinones in the photosynthetic chain and possibly in a chloroplast respiratory chain. The immediate electron acceptor for the enzyme in this species is believed to be plastoquinone. Couples the redox reaction to proton translocation, and thus conserves the redox energy in a proton gradient. The sequence is that of NAD(P)H-quinone oxidoreductase subunit 1, chloroplastic from Cucumis sativus (Cucumber).